A 359-amino-acid polypeptide reads, in one-letter code: GDSL esterase/lipase At5g03610 (359 aa).

Residues 1–22 (MDSLIKLFFCLFIFLCTSLLFG) form the signal peptide. The Nucleophile role is filled by S50. N-linked (GlcNAc...) asparagine glycosylation is found at N136, N236, and N259. Catalysis depends on residues D332 and H335.

This sequence belongs to the 'GDSL' lipolytic enzyme family.

It localises to the secreted. This Arabidopsis thaliana (Mouse-ear cress) protein is GDSL esterase/lipase At5g03610.